We begin with the raw amino-acid sequence, 145 residues long: Large ribosomal subunit protein bL17 (145 aa).

The protein belongs to the bacterial ribosomal protein bL17 family. In terms of assembly, part of the 50S ribosomal subunit. Contacts protein L32.

The protein is Large ribosomal subunit protein bL17 of Francisella tularensis subsp. tularensis (strain FSC 198).